A 202-amino-acid chain; its full sequence is Putative 5'(3')-deoxyribonucleotidase (202 aa).

The active-site Nucleophile is Asp22. Mg(2+)-binding residues include Asp22, Asp24, and Asp156. Asp24 serves as the catalytic Proton donor.

Belongs to the 5'(3')-deoxyribonucleotidase family. Mg(2+) is required as a cofactor.

Dephosphorylates the 5' and 2'(3')-phosphates of deoxyribonucleotides. The chain is Putative 5'(3')-deoxyribonucleotidase from Chlorobaculum tepidum (strain ATCC 49652 / DSM 12025 / NBRC 103806 / TLS) (Chlorobium tepidum).